Reading from the N-terminus, the 321-residue chain is tRNA U34 carboxymethyltransferase (321 aa).

Carboxy-S-adenosyl-L-methionine contacts are provided by residues Lys-90, Trp-104, Lys-109, Gly-129, 151–153 (DPT), 180–181 (IE), Met-195, Tyr-199, and Arg-314.

It belongs to the class I-like SAM-binding methyltransferase superfamily. CmoB family. Homotetramer.

The catalysed reaction is carboxy-S-adenosyl-L-methionine + 5-hydroxyuridine(34) in tRNA = 5-carboxymethoxyuridine(34) in tRNA + S-adenosyl-L-homocysteine + H(+). In terms of biological role, catalyzes carboxymethyl transfer from carboxy-S-adenosyl-L-methionine (Cx-SAM) to 5-hydroxyuridine (ho5U) to form 5-carboxymethoxyuridine (cmo5U) at position 34 in tRNAs. The polypeptide is tRNA U34 carboxymethyltransferase (Histophilus somni (strain 2336) (Haemophilus somnus)).